A 603-amino-acid polypeptide reads, in one-letter code: F-box only protein 46 (603 aa).

The segment at 18–54 (SKYSQNQPRPPSTALKPPVCPDTSSGTEPDHRPAHLE) is disordered. 2 positions are modified to phosphoserine: Ser21 and Ser67. 4 disordered regions span residues 113 to 165 (SRAS…SSGD), 235 to 301 (EAQR…TRAK), 332 to 359 (EASE…ARDC), and 412 to 442 (QSRG…GTTD). Position 347 is a phosphothreonine (Thr347). Composition is skewed to pro residues over residues 347–356 (TPPAPPPPPA) and 417–426 (EGPPEPPPAD). In terms of domain architecture, F-box spans 470–522 (RQYMLLLPEHVLVKIFSFLPTRALAALKCTCHHFKGIIEAFGVRATDSRWSRD).

As to quaternary structure, part of a SCF (SKP1-cullin-F-box) protein ligase complex SCF(FBXO46) composed of CUL1, SKP1, RBX1 and FBXO46. In terms of processing, phosphorylated by ATM in response to DNA damage, promoting ubiquitination and degradation by the SCF(FBXO31) complex. ATM-phosphorylated FBXO46 is ubiquitinated and degradaded by the SCF(FBXO31) complex in response to DNA damage.

Its pathway is protein modification; protein ubiquitination. In terms of biological role, substrate-recognition component of the SCF(FBXO46) protein ligase complex, which mediates the ubiquitination and degradation of target proteins. In absence of stress, the SCF(FBXO46) complex catalyzes ubiquitination and degradation of MTOR-phosphorylated FBXO31. In Mus musculus (Mouse), this protein is F-box only protein 46 (Fbxo46).